A 253-amino-acid chain; its full sequence is uncharacterized protein (253 aa).

The protein belongs to the A.longa ORF167/ORF288 family.

The protein resides in the plastid. This is an uncharacterized protein from Euglena longa (Euglenophycean alga).